A 207-amino-acid chain; its full sequence is Small ribosomal subunit protein uS4 (207 aa).

An S4 RNA-binding domain is found at 96-156; sequence RRLDNVVYRL…EKFKTSSFIA (61 aa).

This sequence belongs to the universal ribosomal protein uS4 family. Part of the 30S ribosomal subunit. Contacts protein S5. The interaction surface between S4 and S5 is involved in control of translational fidelity.

One of the primary rRNA binding proteins, it binds directly to 16S rRNA where it nucleates assembly of the body of the 30S subunit. Its function is as follows. With S5 and S12 plays an important role in translational accuracy. This is Small ribosomal subunit protein uS4 from Leptospira interrogans serogroup Icterohaemorrhagiae serovar copenhageni (strain Fiocruz L1-130).